The sequence spans 474 residues: Probable dipeptidase B (474 aa).

Residue C11 is part of the active site.

The protein belongs to the peptidase C69 family.

It catalyses the reaction an L-aminoacyl-L-amino acid + H2O = 2 an L-alpha-amino acid. This chain is Probable dipeptidase B (pepDB), found in Lactococcus lactis subsp. lactis (strain IL1403) (Streptococcus lactis).